A 500-amino-acid chain; its full sequence is Galactofuranose transporter ATP-binding protein YtfR (500 aa).

ABC transporter domains lie at 10–245 (LRTE…LGRE) and 259–497 (LSDK…IMNA). 42 to 49 (GENGAGKS) is an ATP binding site.

Belongs to the ABC transporter superfamily. In terms of assembly, the complex is composed of two ATP-binding proteins (YtfR), two transmembrane proteins (YtfT and YjfF) and a solute-binding protein (YtfQ).

It localises to the cell inner membrane. It carries out the reaction D-galactofuranose(out) + ATP + H2O = D-galactofuranose(in) + ADP + phosphate + H(+). Functionally, part of the ABC transporter complex YtfQRT-YjfF involved in galactofuranose transport. Responsible for energy coupling to the transport system. This chain is Galactofuranose transporter ATP-binding protein YtfR (ytfR), found in Escherichia coli (strain K12).